A 1023-amino-acid polypeptide reads, in one-letter code: Lon protease homolog (1023 aa).

515-522 (GPPGVGKT) is an ATP binding site. The Lon proteolytic domain occupies 810 to 1003 (TNMIGVINGL…IEIITDPNVI (194 aa)). Ser906 is an active-site residue.

Belongs to the peptidase S16 family.

The protein is Lon protease homolog of Acanthamoeba polyphaga (Amoeba).